Consider the following 292-residue polypeptide: Small ribosomal subunit protein uS9m (292 aa).

The interval 273–292 (VERKKPGKRKARKMPTWVKR) is disordered.

The protein belongs to the universal ribosomal protein uS9 family.

It localises to the mitochondrion. This is Small ribosomal subunit protein uS9m (MRPS9) from Kluyveromyces marxianus (Yeast).